The primary structure comprises 789 residues: DEAD-box ATP-dependent RNA helicase 28 (789 aa).

The interval 1 to 152 (MPSSFFFEDA…AEYKPEDATP (152 aa)) is disordered. Residues 13-66 (DELELIRNQEDSSEEDVKEGEAEEHEAGEDEDGEEEYEEEDDDEEEEDEKRKRD) are a coiled coil. Over residues 23–60 (DSSEEDVKEGEAEEHEAGEDEDGEEEYEEEDDDEEEED) the composition is skewed to acidic residues. The segment covering 83 to 99 (GEEHARRHTTSIDEKIS) has biased composition (basic and acidic residues). A coiled-coil region spans residues 110–135 (SINEEEEEEEEEEDASDAETDKQEEY). Acidic residues predominate over residues 112 to 127 (NEEEEEEEEEEDASDA). The Q motif motif lies at 167-195 (DTFMELNLSRPLLRACETLGYKKPTPIQA). The 175-residue stretch at 198–372 (IPLALTGRDL…KLSLNKPLRL (175 aa)) folds into the Helicase ATP-binding domain. Residue 211–218 (AITGSGKT) coordinates ATP. The DEAD box signature appears at 320 to 323 (DEAD). One can recognise a Helicase C-terminal domain in the interval 402–546 (VLLSLCTRTF…SRVIPEQSIV (145 aa)). Coiled-coil stretches lie at residues 563–591 (ISAERDERALRKAEMEFAKAENMLEHRDE) and 628–677 (SADR…EDEE). Residues 611 to 789 (AQAEKDSAGN…FKSKARYKRR (179 aa)) are disordered. Residues 628-637 (SADRAEDLKM) show a composition bias toward basic and acidic residues. A compositionally biased stretch (basic residues) spans 638–656 (KEKRKREREKNLPRKKRRK). Acidic residues predominate over residues 665 to 678 (EDNEGEEEEEDEEG). 3 stretches are compositionally biased toward basic and acidic residues: residues 691 to 701 (KKQETDKKGLT), 718 to 734 (RAIDSGKMERPKPDKKQ), and 743 to 761 (PRGEEMKDLFKSDMGEKKQ). A compositionally biased stretch (basic residues) spans 772-789 (PRTKSKNSFKSKARYKRR).

Belongs to the DEAD box helicase family. DDX27/DRS1 subfamily.

The enzyme catalyses ATP + H2O = ADP + phosphate + H(+). This chain is DEAD-box ATP-dependent RNA helicase 28 (RH28), found in Arabidopsis thaliana (Mouse-ear cress).